An 891-amino-acid chain; its full sequence is Extended synaptotagmin-3 (891 aa).

The segment at 1–30 is disordered; that stretch reads MQPEEPCAPSAPGGPDVPERGQRSRDPGPR. The Cytoplasmic portion of the chain corresponds to 1 to 32; the sequence is MQPEEPCAPSAPGGPDVPERGQRSRDPGPRLS. The segment covering 17 to 28 has biased composition (basic and acidic residues); it reads VPERGQRSRDPG. A helical membrane pass occupies residues 33-53; that stretch reads GQLLPELYSFVARVLFYLAPV. Position 54 (Y54) is a topological domain, lumenal. The helical transmembrane segment at 55–75 threads the bilayer; that stretch reads LAGYLGLSVTWLLLGALLWMW. Residues 76–891 lie on the Cytoplasmic side of the membrane; sequence WRRNRRGKLG…ELTADGQPRS (816 aa). One can recognise an SMP-LTD domain in the interval 118–295; sequence DVERVEWANK…LPNRVTVPVK (178 aa). C2 domains lie at 292–412 and 430–570; these read VPVK…DEWF and SLLT…QLDH. 9 residues coordinate Ca(2+): K325, D326, D336, D383, E384, D385, D387, D389, and D390. The tract at residues 652–711 is disordered; it reads SAATTDPEPMPEPQGPGPEPKGKDSARGLCESPGKKKNPATTFLTVPGLHSPGPIKSPRP. A compositionally biased stretch (pro residues) spans 659 to 670; the sequence is EPMPEPQGPGPE. The C2 3 domain occupies 759 to 881; sequence RLGEIQLTVR…DLIKGFSQWY (123 aa). The interval 806 to 813 is required for phosphatidylinositol 4,5-bisphosphate-dependent location at the cell membrane; it reads RRWASRKK.

It belongs to the extended synaptotagmin family.

The protein resides in the cell membrane. The protein localises to the endoplasmic reticulum membrane. Its function is as follows. Tethers the endoplasmic reticulum to the cell membrane and promotes the formation of appositions between the endoplasmic reticulum and the cell membrane. Binds glycerophospholipids in a barrel-like domain and may play a role in cellular lipid transport. The chain is Extended synaptotagmin-3 (Esyt3) from Mus musculus (Mouse).